Here is a 259-residue protein sequence, read N- to C-terminus: Type III pantothenate kinase (259 aa).

9-16 (DAGNSRIK) contributes to the ATP binding site. Residues Tyr-93 and 100–103 (GSDR) contribute to the substrate site. The Proton acceptor role is filled by Asp-102. Thr-126 is an ATP binding site. Thr-190 contacts substrate.

It belongs to the type III pantothenate kinase family. Homodimer. NH4(+) serves as cofactor. The cofactor is K(+).

Its subcellular location is the cytoplasm. The enzyme catalyses (R)-pantothenate + ATP = (R)-4'-phosphopantothenate + ADP + H(+). It participates in cofactor biosynthesis; coenzyme A biosynthesis; CoA from (R)-pantothenate: step 1/5. In terms of biological role, catalyzes the phosphorylation of pantothenate (Pan), the first step in CoA biosynthesis. The protein is Type III pantothenate kinase of Burkholderia thailandensis (strain ATCC 700388 / DSM 13276 / CCUG 48851 / CIP 106301 / E264).